Here is a 577-residue protein sequence, read N- to C-terminus: Arginine--tRNA ligase (577 aa).

A 'HIGH' region motif is present at residues 122-132; that stretch reads PNVAKEMHVGH.

Belongs to the class-I aminoacyl-tRNA synthetase family. In terms of assembly, monomer.

The protein localises to the cytoplasm. It carries out the reaction tRNA(Arg) + L-arginine + ATP = L-arginyl-tRNA(Arg) + AMP + diphosphate. The sequence is that of Arginine--tRNA ligase from Klebsiella pneumoniae (strain 342).